We begin with the raw amino-acid sequence, 228 residues long: MERECGSKELFSKEELQEISGVHVGDDYVEVMCGCTSHRYGDAVARLKIFSDGELQITCQCTPACLEDKLTPAAFEKHSERETSRNWRNNVWVFIEGDKVPLSKTVLLRYYNKALKNSNVSKVIHRDEFVGCSTCGKERRFRLRSRGECRMHHDAIAEPNWKCCDYPYDKITCEEEEERGSRKVFRGCTRSPSCKGCTSCVCFGCKLCRFSDCNCQTCLDFTTNAKPI.

An SAND domain is found at Glu14–Ser121.

As to expression, expressed in influorescence, pollen and siliques, with a higher expression in influorescence.

It localises to the cytoplasm. Its subcellular location is the nucleus. Its function is as follows. Putative transcription factor that acts as a key negative regulator of cell accumulation in shoot and floral meristems. Negatively regulates the size of the WUSCHEL (WUS)-expressing organizing center in inflorescence meristems. May act by down-regulating expression of WUS. Can compensate for mutant ULT1 protein when overexpressed. This chain is Protein ULTRAPETALA 2 (ULT2), found in Arabidopsis thaliana (Mouse-ear cress).